The primary structure comprises 432 residues: ATP-dependent RNA helicase RhlB (432 aa).

A Q motif motif is present at residues glutamine 9–alanine 37. One can recognise a Helicase ATP-binding domain in the interval leucine 40–valine 219. Residue alanine 53–threonine 60 coordinates ATP. The DEAD box signature appears at aspartate 165–aspartate 168. The Helicase C-terminal domain occupies alanine 245–leucine 390. The tract at residues leucine 397 to serine 432 is disordered. A compositionally biased stretch (basic residues) spans glycine 417–glutamine 426.

Belongs to the DEAD box helicase family. RhlB subfamily. Component of the RNA degradosome, which is a multiprotein complex involved in RNA processing and mRNA degradation.

The protein resides in the cytoplasm. The catalysed reaction is ATP + H2O = ADP + phosphate + H(+). Functionally, DEAD-box RNA helicase involved in RNA degradation. Has RNA-dependent ATPase activity and unwinds double-stranded RNA. The protein is ATP-dependent RNA helicase RhlB of Aliivibrio fischeri (strain MJ11) (Vibrio fischeri).